Reading from the N-terminus, the 124-residue chain is Conotoxin Cl14.12 (124 aa).

Residues Met1–Ala17 form the signal peptide. Residues Leu18–Thr74 constitute a propeptide that is removed on maturation.

Post-translationally, contains 2 disulfide bond. As to expression, expressed by the venom duct.

The protein localises to the secreted. This Californiconus californicus (California cone) protein is Conotoxin Cl14.12.